The chain runs to 140 residues: MNAITIFFIILSTVAVCIIIFQLYSIYLNYDNIKEFNSAHSAFEFSKSVNTLSLDRTIKDPNDDIYDPKQKWRCVKLDNDYVSVSMFGFKSNGSEIRKFKNLESCIDYTFSQSTHSDIKNPCILQNGIKSKECIFLKSMF.

Residues 1 to 21 traverse the membrane as a helical; Signal-anchor for type II membrane protein segment; it reads MNAITIFFIILSTVAVCIIIF. Topologically, residues 22–140 are virion surface; that stretch reads QLYSIYLNYD…KECIFLKSMF (119 aa).

The protein belongs to the poxviridae A28 protein family. Contains two intramolecular disulfide bonds. They are created by the viral disulfide bond formation pathway, a poxvirus-specific pathway that operates on the cytoplasmic side of the MV membranes.

It localises to the virion membrane. Its function is as follows. Envelope protein required for virus entry into host cell and for cell-cell fusion (syncytium formation). This is Envelope protein A28 homolog from Bos taurus (Bovine).